Consider the following 663-residue polypeptide: Cytochrome bo(3) ubiquinol oxidase subunit 1 (663 aa).

Residues 1–16 (MFGKLSLDAVPFHEPI) lie on the Periplasmic side of the membrane. The helical transmembrane segment at 17-35 (VMVTIAGIILGGLALVGLI) threads the bilayer. Topologically, residues 36 to 52 (TYFGKWTYLWKEWLTSV) are cytoplasmic. The chain crosses the membrane as a helical span at residues 53-80 (DHKRLGIMYIIVAIVMLLRGFADAIMMR). Residues Arg-71 and Asp-75 each coordinate ubiquinone-8. Over 81–95 (SQQALASAGEAGFLP) the chain is Periplasmic. A helical transmembrane segment spans residues 96–132 (PHHYDQIFTAHGVIMIFFVAMPFVIGLMNLVVPLQIG). His-98 contacts ubiquinone-8. His-106 serves as a coordination point for heme b. At 133–137 (ARDVA) the chain is on the cytoplasmic side. The chain crosses the membrane as a helical span at residues 138–161 (FPFLNNLSFWFTVVGVILVNVSLG). At 162 to 184 (VGEFAQTGWLAYPPLSGIEYSPG) the chain is on the periplasmic side. Position 170 (Trp-170) interacts with heme b. Residues 185-215 (VGVDYWIWSLQLSGIGTTLTGINFFVTILKM) traverse the membrane as a helical segment. Over 216–224 (RAPGMTMFK) the chain is Cytoplasmic. Residues 225–260 (MPVFTWASLCANVLIIASFPILTVTVALLTLDRYLG) traverse the membrane as a helical segment. Residues 261 to 270 (THFFTNDMGG) are Periplasmic-facing. The helical transmembrane segment at 271-307 (NMMMYINLIWAWGHPEVYILILPVFGVFSEIAATFSR) threads the bilayer. His-284 provides a ligand contact to Cu(2+). The 1'-histidyl-3'-tyrosine (His-Tyr) cross-link spans 284–288 (HPEVY). A Fe(II)-heme o-binding site is contributed by Tyr-288. Residues 308–311 (KRLF) lie on the Cytoplasmic side of the membrane. The chain crosses the membrane as a helical span at residues 312–326 (GYTSLVWATVCITVL). The Periplasmic portion of the chain corresponds to 327-340 (SFIVWLHHFFTMGA). Positions 333 and 334 each coordinate Cu(2+). A helical transmembrane segment spans residues 341–369 (GANVNAFFGITTMIIAIPTGVKIFNWLFT). Over 370 to 377 (MYQGRIVF) the chain is Cytoplasmic. Residues 378–409 (HSAMLWTIGFIVTFSVGGMTGVLLAVPGADFV) form a helical membrane-spanning segment. The Periplasmic portion of the chain corresponds to 410-412 (LHN). Fe(II)-heme o is bound by residues His-411 and His-419. A helical membrane pass occupies residues 413-445 (SLFLIAHFHNVIIGGVVFGCFAGMTYWWPKAFG). Position 421 (His-421) interacts with heme b. The Cytoplasmic portion of the chain corresponds to 446-448 (FKL). The helical transmembrane segment at 449 to 477 (NETWGKRAFWFWIIGFFVAFMPLYALGFM) threads the bilayer. Topologically, residues 478–489 (GMTRRLSQQIDP) are periplasmic. Residues Arg-481 and Arg-482 each coordinate heme b. A helical transmembrane segment spans residues 490–521 (QFHTMLMIAASGAVLIALGILCLVIQMYVSIR). The Cytoplasmic segment spans residues 522-587 (DRDQNRDLTG…DHYEEIHMPK (66 aa)). Residues 588–606 (NSGAGIVIAAFSTIFGFAM) form a helical membrane-spanning segment. Topologically, residues 607–613 (IWHIWWL) are periplasmic. A helical transmembrane segment spans residues 614-632 (AIVGFAGMIITWIVKSFDE). The Cytoplasmic portion of the chain corresponds to 633 to 663 (DVDYYVPVAEIEKLENQHFDEITKAGLKNGN).

Belongs to the heme-copper respiratory oxidase family. In terms of assembly, the cytochrome bo(3) ubiquinol oxidase complex is a heterooctamer of two A chains, two B chains, two C chains and two D chains. Cu(2+) is required as a cofactor. Requires heme b as cofactor. The cofactor is Fe(II)-heme o.

It is found in the cell inner membrane. It carries out the reaction 2 a ubiquinol + O2 + n H(+)(in) = 2 a ubiquinone + 2 H2O + n H(+)(out). Its function is as follows. Cytochrome bo(3) ubiquinol oxidase is the terminal enzyme in the aerobic respiratory chain of E.coli that predominates when cells are grown at high aeration. Catalyzes the four-electron reduction of O2 to water, using a ubiquinol as a membrane soluble electron donor for molecular oxygen reduction; ubiquinol-8 is the natural substrate for E.coli. Has proton pump activity across the membrane in addition to electron transfer, pumping 2 protons/electron and generating a proton motive force. All the redox centers of this enzyme complex are located within the largest subunit, subunit I. Protons are probably pumped via D- and K- channels found in this subunit. The chain is Cytochrome bo(3) ubiquinol oxidase subunit 1 (cyoB) from Escherichia coli O157:H7.